The primary structure comprises 87 residues: Probable Fe(2+)-trafficking protein (87 aa).

This sequence belongs to the Fe(2+)-trafficking protein family. In terms of assembly, monomer.

Could be a mediator in iron transactions between iron acquisition and iron-requiring processes, such as synthesis and/or repair of Fe-S clusters in biosynthetic enzymes. The polypeptide is Probable Fe(2+)-trafficking protein (Buchnera aphidicola subsp. Baizongia pistaciae (strain Bp)).